We begin with the raw amino-acid sequence, 353 residues long: GTPase Obg (353 aa).

The Obg domain maps to 1–159 (MRFVDEVVIN…RVIRLELKLL (159 aa)). The region spanning 160–334 (ADVGLLGMPN…LCTAIMQELT (175 aa)) is the OBG-type G domain. Residues 166-173 (GMPNAGKS), 191-195 (FTTLH), 213-216 (DIPG), 284-287 (NKMD), and 315-317 (SAA) each bind GTP. Residues serine 173 and threonine 193 each coordinate Mg(2+).

Belongs to the TRAFAC class OBG-HflX-like GTPase superfamily. OBG GTPase family. In terms of assembly, monomer. The cofactor is Mg(2+).

The protein resides in the cytoplasm. In terms of biological role, an essential GTPase which binds GTP, GDP and possibly (p)ppGpp with moderate affinity, with high nucleotide exchange rates and a fairly low GTP hydrolysis rate. Plays a role in control of the cell cycle, stress response, ribosome biogenesis and in those bacteria that undergo differentiation, in morphogenesis control. The sequence is that of GTPase Obg from Dichelobacter nodosus (strain VCS1703A).